The following is a 205-amino-acid chain: Probable thymidylate kinase (205 aa).

Residue 9–16 (GIDGVGKS) coordinates ATP.

Belongs to the thymidylate kinase family.

The catalysed reaction is dTMP + ATP = dTDP + ADP. This Caldivirga maquilingensis (strain ATCC 700844 / DSM 13496 / JCM 10307 / IC-167) protein is Probable thymidylate kinase.